The primary structure comprises 192 residues: Glutaredoxin-C9 (192 aa).

The Glutaredoxin domain occupies 89-191; the sequence is YERVARMASG…PLLKQAGALW (103 aa). Cysteine 109 and cysteine 112 are oxidised to a cystine. The Responsive for interaction with TGA factors signature appears at 189-192; that stretch reads ALWL.

This sequence belongs to the glutaredoxin family. CC-type subfamily.

Its subcellular location is the cytoplasm. The protein resides in the nucleus. Its function is as follows. Has a glutathione-disulfide oxidoreductase activity in the presence of NADPH and glutathione reductase. Reduces low molecular weight disulfides and proteins. In Oryza sativa subsp. japonica (Rice), this protein is Glutaredoxin-C9 (GRXC9).